Here is a 526-residue protein sequence, read N- to C-terminus: GMP synthase [glutamine-hydrolyzing] (526 aa).

The Glutamine amidotransferase type-1 domain occupies 13–204; that stretch reads TVLVVDFGAQ…LYRGAGLSPD (192 aa). The active-site Nucleophile is Cys-90. Active-site residues include His-178 and Glu-180. The GMPS ATP-PPase domain occupies 205 to 400; it reads WTTGNVIEEQ…LGLPDEIVQR (196 aa). Position 232–238 (232–238) interacts with ATP; that stretch reads SGGVDSA.

As to quaternary structure, homodimer.

It carries out the reaction XMP + L-glutamine + ATP + H2O = GMP + L-glutamate + AMP + diphosphate + 2 H(+). It participates in purine metabolism; GMP biosynthesis; GMP from XMP (L-Gln route): step 1/1. In terms of biological role, catalyzes the synthesis of GMP from XMP. In Streptomyces coelicolor (strain ATCC BAA-471 / A3(2) / M145), this protein is GMP synthase [glutamine-hydrolyzing] (guaA).